The following is a 1134-amino-acid chain: Spermatogenesis-associated protein 31C2 (1134 aa).

The chain crosses the membrane as a helical span at residues 23 to 43 (PWVLDIFLTLVFALGFFFLLL). Disordered regions lie at residues 54 to 87 (PPSPSPKKRKRHLVSQRPAGRRGRPRGRMKNHSL), 115 to 243 (LEKG…LLTP), 477 to 504 (PGTSQAKGKPRPWQSSTSTGESSKEAQT), 524 to 561 (TPQNLSRGMESFPGKVLGATSEESERNLRKPLRSDSGS), 727 to 807 (MPER…PTVP), 928 to 1007 (NMGH…PSIS), and 1111 to 1134 (AASSQQATLKNQSRPNRDRQIRDQ). Basic residues predominate over residues 59-87 (PKKRKRHLVSQRPAGRRGRPRGRMKNHSL). Residues 132–148 (VGKRTPDGASRSSHEPT) are compositionally biased toward basic and acidic residues. Low complexity predominate over residues 185 to 201 (SSLSASQPPEPSLLLEH). Positions 204–235 (PEPPALFPHPPRTPDPLACSPPPPKGFTPPPL) are enriched in pro residues. The span at 489-504 (WQSSTSTGESSKEAQT) shows a compositional bias: polar residues. Polar residues-rich tracts occupy residues 773 to 794 (LTYSLTGSTQQSRSLGAQSSRA) and 937 to 948 (PNCQGSCKSQSP). A compositionally biased stretch (basic and acidic residues) spans 954–970 (HKRENSRKPNLEKHEEM). The span at 1111 to 1124 (AASSQQATLKNQSR) shows a compositional bias: polar residues. Positions 1125-1134 (PNRDRQIRDQ) are enriched in basic and acidic residues.

The protein belongs to the SPATA31 family.

The protein localises to the membrane. Its function is as follows. May play a role in spermatogenesis. The chain is Spermatogenesis-associated protein 31C2 (SPATA31C2) from Homo sapiens (Human).